The sequence spans 281 residues: LC-AMP precursor 3 (281 aa).

Residues 1–19 form the signal peptide; the sequence is MKYTIIPFLLLVALTCATA. Positions 20 to 56 are excised as a propeptide; the sequence is RSIDGSEKEVQEIREETPSSNEDVPFSLSANEDEEAR. L74 bears the Leucine amide mark. The propeptide occupies 75 to 89; the sequence is GREESLSANEDEEAR. The residue at position 114 (S114) is a Serine amide. Residues 115–129 constitute a propeptide that is removed on maturation; sequence GREESFSANEDEEER. Residue L147 is modified to Leucine amide. The propeptide occupies 148-162; sequence GREESISANEDEETR. Leucine amide is present on L180. A propeptide spanning residues 181-195 is cleaved from the precursor; sequence GREESLSAIEDEEAR. L213 bears the Leucine amide mark. The propeptide occupies 214–228; that stretch reads GREESLSANEDEEAR. Position 246 is a leucine amide (L246). The propeptide occupies 247 to 261; sequence GREESLSANEDEEAR. L279 bears the Leucine amide mark.

As to expression, expressed by the venom gland.

It localises to the secreted. Its function is as follows. Antimicrobial peptide that acts by influencing bacterial cell membrane permeability at low concentrations and by directly disrupting structure-function at high concentrations. Shows activity against Gram-negative bacteria (S.typhimurium CGMCC 1.1174 (MIC=2.5 uM), E.coli CCTCC AB 2018675 (MIC=5 uM), S.dysenteriae CGMCC 1.1869 (MIC=2.5 uM), P.aeruginosa CGMCC 1.596 (MIC 5-10 uM), K.pneumoniae (MIC=10 uM), A.baumannii (MIC=5-10 uM)), and Gram-positive bacteria (S.aureus CMCC 26003 or MRSA ATCC 43300 (MIC=5 uM), and E.faecium (MIC=2.5-5 uM)). Inhibits biofilm formation of E.coli and S.aureus in a dose-dependent manner and disrupts established biofilms. Demonstrates minimal bacterial resistance, excellent stability, negligible mammalian cell toxicity, low hemolytic activity, and appropriate selectivity for both normal and tumor cells. When combined with traditional antibiotics, exhibits additive or synergistic therapeutic effects. In vivo, in a neutropenic mouse thigh infection model, exhibits a therapeutic effect in inhibiting bacterial proliferation. This Lycosa coelestis (Wolf spider) protein is LC-AMP precursor 3.